The following is a 251-amino-acid chain: 3-deoxy-manno-octulosonate cytidylyltransferase (251 aa).

This sequence belongs to the KdsB family.

Its subcellular location is the cytoplasm. The enzyme catalyses 3-deoxy-alpha-D-manno-oct-2-ulosonate + CTP = CMP-3-deoxy-beta-D-manno-octulosonate + diphosphate. It functions in the pathway nucleotide-sugar biosynthesis; CMP-3-deoxy-D-manno-octulosonate biosynthesis; CMP-3-deoxy-D-manno-octulosonate from 3-deoxy-D-manno-octulosonate and CTP: step 1/1. It participates in bacterial outer membrane biogenesis; lipopolysaccharide biosynthesis. Functionally, activates KDO (a required 8-carbon sugar) for incorporation into bacterial lipopolysaccharide in Gram-negative bacteria. The chain is 3-deoxy-manno-octulosonate cytidylyltransferase from Brucella ovis (strain ATCC 25840 / 63/290 / NCTC 10512).